A 315-amino-acid polypeptide reads, in one-letter code: MKAENEQRTGLLYGFGAYGMWGLVPLFWPLLKPSGAVEILAHRMVWSLAVVGLALLALRRWGWIRELLRNPRKLGLTALAASVISVNWGLYIWSVNNEHVVEASLGYFINPLVSIAIGVLVLGERLRRAQWVAVGLSFVAVLVLAIGYGRPPWISLVLAFSFATYGLIKKKLNMGGLESLAAETAVLFLPALGYVLWLGAQGQSTFAAHGVGHALLLAATGLVTAIPLVFFGMAAIRVPLSTLGLLQYMAPVFQFGLGVLYFHEAMPPERWAGFSLVWAALVILTWDALRTARRSRARLEAAAPTVLATPAREPA.

Helical transmembrane passes span 11–31 (LLYG…WPLL), 37–57 (VEIL…ALLA), 75–95 (GLTA…IWSV), 103–123 (ASLG…LVLG), 129–149 (AQWV…IGYG), 180–200 (LAAE…WLGA), 216–236 (LLAA…MAAI), 242–262 (TLGL…VLYF), and 271–291 (WAGF…ALRT). The region spanning 19–146 (GMWGLVPLFW…SFVAVLVLAI (128 aa)) is the EamA domain.

The protein belongs to the EamA transporter family.

It localises to the cell membrane. In Streptomyces exfoliatus (Streptomyces hydrogenans), this protein is Protein RarD (rarD).